A 443-amino-acid chain; its full sequence is Magnesium transporter MRS2-10 (443 aa).

A disordered region spans residues 1-33 (MSELKERLLPPRPASAINLRGDAGSRPSPSGRQ). 2 consecutive transmembrane segments (helical) span residues 379 to 399 (LLLT…GIFG) and 415 to 435 (WVLA…LWYY). Residues 399 to 401 (GMN) carry the Required for magnesium transport activity motif.

This sequence belongs to the CorA metal ion transporter (MIT) (TC 1.A.35.5) family. Expressed in the whole plant.

The protein localises to the cell membrane. High-affinity magnesium transporter that mediates the influx of magnesium. Involved in tolerance to Aluminum. This is Magnesium transporter MRS2-10 (MRS2-10) from Arabidopsis thaliana (Mouse-ear cress).